We begin with the raw amino-acid sequence, 113 residues long: Large ribosomal subunit protein eL36z (113 aa).

A compositionally biased stretch (basic residues) spans 78–88 (RKLGTHKRAKR). The tract at residues 78–113 (RKLGTHKRAKRKREEMSSVLRKMRSLGGAAAAEKKM) is disordered.

It belongs to the eukaryotic ribosomal protein eL36 family.

In Arabidopsis thaliana (Mouse-ear cress), this protein is Large ribosomal subunit protein eL36z (RPL36A).